A 473-amino-acid chain; its full sequence is MKRASAGGSRLLAWVLWLQAWQVAAPCPGACVCYNEPKVTTSCPQQGLQAVPVGIPAASQRIFLHGNRISHVPAASFRACRNLTILWLHSNVLARIDAAAFTGLALLEQLDLSDNAQLRSVDPATFHGLGRLHTLHLDRCGLQELGPGLFRGLAALQYLYLQDNALQALPDDTFRDLGNLTHLFLHGNRISSVPERAFRGLHSLDRLLLHQNRVAHVHPHAFRDLGRLMTLYLFANNLSALPTEALAPLRALQYLRLNDNPWVCDCRARPLWAWLQKFRGSSSEVPCSLPQRLAGRDLKRLAANDLQGCAVATGPYHPIWTGRATDEEPLGLPKCCQPDAADKASVLEPGRPASAGNALKGRVPPGDSPPGNGSGPRHINDSPFGTLPGSAEPPLTAVRPEGSEPPGFPTSGPRRRPGCSRKNRTRSHCRLGQAGSGGGGTGDSEGSGALPSLTCSLTPLGLALVLWTVLGPC.

The N-terminal stretch at 1 to 26 (MKRASAGGSRLLAWVLWLQAWQVAAP) is a signal peptide. 2 disulfides stabilise this stretch: cysteine 27-cysteine 33 and cysteine 31-cysteine 43. The 28-residue stretch at 27–54 (CPGACVCYNEPKVTTSCPQQGLQAVPVG) folds into the LRRNT domain. LRR repeat units lie at residues 55–79 (IPAA…SFRA), 81–103 (RNLT…AFTG), 104–128 (LALL…TFHG), 129–152 (LGRL…LFRG), 153–176 (LAAL…TFRD), 178–200 (GNLT…AFRG), 202–224 (HSLD…AFRD), 225–248 (LGRL…ALAP), and 250–273 (RALQ…PLWA). Residue asparagine 82 is glycosylated (N-linked (GlcNAc...) asparagine). Asparagine 179 carries N-linked (GlcNAc...) asparagine glycosylation. Positions 260-310 (NPWVCDCRARPLWAWLQKFRGSSSEVPCSLPQRLAGRDLKRLAANDLQGCA) constitute an LRRCT domain. Cystine bridges form between cysteine 264/cysteine 287, cysteine 266/cysteine 335, and cysteine 309/cysteine 336. The tract at residues 346–447 (VLEPGRPASA…GGGTGDSEGS (102 aa)) is disordered. Over residues 413-429 (PRRRPGCSRKNRTRSHC) the composition is skewed to basic residues. Residues 434 to 445 (AGSGGGGTGDSE) show a composition bias toward gly residues. The GPI-anchor amidated serine moiety is linked to residue serine 447. Positions 448–473 (GALPSLTCSLTPLGLALVLWTVLGPC) are cleaved as a propeptide — removed in mature form.

The protein belongs to the Nogo receptor family. In terms of assembly, homodimer. Interacts with MAG. Interacts with RTN4. Interacts with NGFR. Interacts with LINGO1. Interacts with KIAA0319L. Interacts with OLFM1; this inhibits interaction with LINGO1 and NGFR. Interacts with OMG. Post-translationally, N-glycosylated. O-glycosylated. Contains terminal sialic acid groups on its glycan chains. As to expression, widespread in the brain but highest levels in the gray matter. Low levels in heart and kidney; not expressed in oligodendrocytes (white matter).

The protein resides in the cell membrane. The protein localises to the membrane raft. Its subcellular location is the cell projection. It is found in the dendrite. It localises to the axon. The protein resides in the perikaryon. Its function is as follows. Receptor for RTN4, OMG and MAG. Functions as a receptor for the sialylated gangliosides GT1b and GM1. Besides, functions as a receptor for chondroitin sulfate proteoglycans. Can also bind heparin. Intracellular signaling cascades are triggered via the coreceptor NGFR. Signaling mediates activation of Rho and downstream reorganization of the actin cytoskeleton. Mediates axonal growth inhibition. Plays a role in regulating axon regeneration and neuronal plasticity in the adult central nervous system. Plays a role in postnatal brain development. Required for normal axon migration across the brain midline and normal formation of the corpus callosum. Protects motoneurons against apoptosis; protection against apoptosis is probably mediated via interaction with MAG. Acts in conjunction with RTN4 and LINGO1 in regulating neuronal precursor cell motility during cortical development. Like other family members, plays a role in restricting the number dendritic spines and the number of synapses that are formed during brain development. In Homo sapiens (Human), this protein is Reticulon-4 receptor (RTN4R).